We begin with the raw amino-acid sequence, 197 residues long: Xanthine phosphoribosyltransferase (197 aa).

2 residues coordinate xanthine: L20 and N27. 128 to 132 (ANGQA) serves as a coordination point for 5-phospho-alpha-D-ribose 1-diphosphate. Residue K156 coordinates xanthine.

This sequence belongs to the purine/pyrimidine phosphoribosyltransferase family. Xpt subfamily. Homodimer.

The protein localises to the cytoplasm. It carries out the reaction XMP + diphosphate = xanthine + 5-phospho-alpha-D-ribose 1-diphosphate. It participates in purine metabolism; XMP biosynthesis via salvage pathway; XMP from xanthine: step 1/1. Functionally, converts the preformed base xanthine, a product of nucleic acid breakdown, to xanthosine 5'-monophosphate (XMP), so it can be reused for RNA or DNA synthesis. The protein is Xanthine phosphoribosyltransferase of Bacillus cytotoxicus (strain DSM 22905 / CIP 110041 / 391-98 / NVH 391-98).